The chain runs to 347 residues: NADH-ubiquinone oxidoreductase chain 2 (347 aa).

A run of 11 helical transmembrane segments spans residues 1-21 (MNPL…IITM), 25-45 (HWLT…PLIM), 59-79 (YFLI…INFM), 96-116 (TIIL…FWVP), 123-143 (LLST…SILY), 153-173 (IILA…LNQT), 178-198 (IMAY…IYNP), 200-220 (LMLL…TILI), 239-259 (ILMM…PLSG), 278-298 (ISLT…RLIY), and 325-345 (FLPT…MMFI).

The protein belongs to the complex I subunit 2 family. In terms of assembly, core subunit of respiratory chain NADH dehydrogenase (Complex I) which is composed of 45 different subunits. Interacts with TMEM242.

Its subcellular location is the mitochondrion inner membrane. It catalyses the reaction a ubiquinone + NADH + 5 H(+)(in) = a ubiquinol + NAD(+) + 4 H(+)(out). Core subunit of the mitochondrial membrane respiratory chain NADH dehydrogenase (Complex I) that is believed to belong to the minimal assembly required for catalysis. Complex I functions in the transfer of electrons from NADH to the respiratory chain. The immediate electron acceptor for the enzyme is believed to be ubiquinone. The chain is NADH-ubiquinone oxidoreductase chain 2 from Oryzorictes hova (Hova rice tenrec).